The primary structure comprises 365 residues: Chaperone protein DnaJ (365 aa).

One can recognise a J domain in the interval 4 to 70 (DYYKILGVDR…QKRRMYDQTG (67 aa)). The CR-type zinc finger occupies 139–220 (GTEKRIKYRR…CNGTGTVVVN (82 aa)). The Zn(2+) site is built by Cys152, Cys155, Cys168, Cys171, Cys194, Cys197, Cys208, and Cys211. 4 CXXCXGXG motif repeats span residues 152-159 (CPDCNGTG), 168-175 (CPTCNGTG), 194-201 (CQTCGGRG), and 208-215 (CPRCNGTG).

It belongs to the DnaJ family. As to quaternary structure, homodimer. Zn(2+) is required as a cofactor.

It localises to the cytoplasm. Participates actively in the response to hyperosmotic and heat shock by preventing the aggregation of stress-denatured proteins and by disaggregating proteins, also in an autonomous, DnaK-independent fashion. Unfolded proteins bind initially to DnaJ; upon interaction with the DnaJ-bound protein, DnaK hydrolyzes its bound ATP, resulting in the formation of a stable complex. GrpE releases ADP from DnaK; ATP binding to DnaK triggers the release of the substrate protein, thus completing the reaction cycle. Several rounds of ATP-dependent interactions between DnaJ, DnaK and GrpE are required for fully efficient folding. Also involved, together with DnaK and GrpE, in the DNA replication of plasmids through activation of initiation proteins. The protein is Chaperone protein DnaJ of Thermoplasma acidophilum (strain ATCC 25905 / DSM 1728 / JCM 9062 / NBRC 15155 / AMRC-C165).